The chain runs to 151 residues: Small ribosomal subunit protein uS15 (151 aa).

Phosphoserine is present on residues Ser21 and Ser32.

Belongs to the universal ribosomal protein uS15 family. Component of the small ribosomal subunit (SSU). Mature yeast ribosomes consist of a small (40S) and a large (60S) subunit. The 40S small subunit contains 1 molecule of ribosomal RNA (18S rRNA) and at least 33 different proteins. The large 60S subunit contains 3 rRNA molecules (25S, 5.8S and 5S rRNA) and at least 46 different proteins.

The protein localises to the cytoplasm. Functionally, component of the ribosome, a large ribonucleoprotein complex responsible for the synthesis of proteins in the cell. The small ribosomal subunit (SSU) binds messenger RNAs (mRNAs) and translates the encoded message by selecting cognate aminoacyl-transfer RNA (tRNA) molecules. The large subunit (LSU) contains the ribosomal catalytic site termed the peptidyl transferase center (PTC), which catalyzes the formation of peptide bonds, thereby polymerizing the amino acids delivered by tRNAs into a polypeptide chain. The nascent polypeptides leave the ribosome through a tunnel in the LSU and interact with protein factors that function in enzymatic processing, targeting, and the membrane insertion of nascent chains at the exit of the ribosomal tunnel. This Schizosaccharomyces pombe (strain 972 / ATCC 24843) (Fission yeast) protein is Small ribosomal subunit protein uS15 (rps13).